The following is a 194-amino-acid chain: Leucyl/phenylalanyl-tRNA--protein transferase (194 aa).

This sequence belongs to the L/F-transferase family.

It is found in the cytoplasm. The catalysed reaction is N-terminal L-lysyl-[protein] + L-leucyl-tRNA(Leu) = N-terminal L-leucyl-L-lysyl-[protein] + tRNA(Leu) + H(+). It catalyses the reaction N-terminal L-arginyl-[protein] + L-leucyl-tRNA(Leu) = N-terminal L-leucyl-L-arginyl-[protein] + tRNA(Leu) + H(+). It carries out the reaction L-phenylalanyl-tRNA(Phe) + an N-terminal L-alpha-aminoacyl-[protein] = an N-terminal L-phenylalanyl-L-alpha-aminoacyl-[protein] + tRNA(Phe). Functionally, functions in the N-end rule pathway of protein degradation where it conjugates Leu, Phe and, less efficiently, Met from aminoacyl-tRNAs to the N-termini of proteins containing an N-terminal arginine or lysine. The chain is Leucyl/phenylalanyl-tRNA--protein transferase from Chlorobium luteolum (strain DSM 273 / BCRC 81028 / 2530) (Pelodictyon luteolum).